The sequence spans 231 residues: Large ribosomal subunit protein uL1 (231 aa).

This sequence belongs to the universal ribosomal protein uL1 family. As to quaternary structure, part of the 50S ribosomal subunit.

Functionally, binds directly to 23S rRNA. The L1 stalk is quite mobile in the ribosome, and is involved in E site tRNA release. In terms of biological role, protein L1 is also a translational repressor protein, it controls the translation of the L11 operon by binding to its mRNA. This Teredinibacter turnerae (strain ATCC 39867 / T7901) protein is Large ribosomal subunit protein uL1.